A 216-amino-acid chain; its full sequence is Phosphoenolpyruvate guanylyltransferase (216 aa).

Positions 150, 165, and 168 each coordinate phosphoenolpyruvate.

Belongs to the CofC family.

It carries out the reaction phosphoenolpyruvate + GTP + H(+) = enolpyruvoyl-2-diphospho-5'-guanosine + diphosphate. The protein operates within cofactor biosynthesis; coenzyme F420 biosynthesis. In terms of biological role, guanylyltransferase that catalyzes the activation of phosphoenolpyruvate (PEP) as enolpyruvoyl-2-diphospho-5'-guanosine, via the condensation of PEP with GTP. It is involved in the biosynthesis of coenzyme F420, a hydride carrier cofactor. The protein is Phosphoenolpyruvate guanylyltransferase of Mycobacterium leprae (strain Br4923).